The primary structure comprises 233 residues: Chromosome partition protein MukE (233 aa).

The disordered stretch occupies residues 207–233 (SLSLHDESDDADVTMGNAADSVEDEQE).

This sequence belongs to the MukE family. Interacts, and probably forms a ternary complex, with MukF and MukB. The complex formation is stimulated by calcium or magnesium.

It is found in the cytoplasm. The protein localises to the nucleoid. In terms of biological role, involved in chromosome condensation, segregation and cell cycle progression. May participate in facilitating chromosome segregation by condensation DNA from both sides of a centrally located replisome during cell division. Probably acts via its interaction with MukB and MukF. In Yersinia pestis, this protein is Chromosome partition protein MukE.